We begin with the raw amino-acid sequence, 341 residues long: Glyceraldehyde-3-phosphate dehydrogenase 2 (341 aa).

Residues 13–14 (RI), aspartate 35, and lysine 85 contribute to the NAD(+) site. D-glyceraldehyde 3-phosphate is bound by residues 157-159 (SCT), threonine 188, 217-218 (TG), and arginine 240. The active-site Nucleophile is the cysteine 158. Asparagine 322 provides a ligand contact to NAD(+).

This sequence belongs to the glyceraldehyde-3-phosphate dehydrogenase family. As to quaternary structure, homotetramer.

Its subcellular location is the cytoplasm. It carries out the reaction D-glyceraldehyde 3-phosphate + phosphate + NAD(+) = (2R)-3-phospho-glyceroyl phosphate + NADH + H(+). It functions in the pathway carbohydrate degradation; glycolysis; pyruvate from D-glyceraldehyde 3-phosphate: step 1/5. In Caenorhabditis briggsae, this protein is Glyceraldehyde-3-phosphate dehydrogenase 2.